We begin with the raw amino-acid sequence, 303 residues long: UDP-3-O-acyl-N-acetylglucosamine deacetylase (303 aa).

Positions 79, 238, and 242 each coordinate Zn(2+). The active-site Proton donor is the His-265.

This sequence belongs to the LpxC family. Zn(2+) is required as a cofactor.

The enzyme catalyses a UDP-3-O-[(3R)-3-hydroxyacyl]-N-acetyl-alpha-D-glucosamine + H2O = a UDP-3-O-[(3R)-3-hydroxyacyl]-alpha-D-glucosamine + acetate. It participates in glycolipid biosynthesis; lipid IV(A) biosynthesis; lipid IV(A) from (3R)-3-hydroxytetradecanoyl-[acyl-carrier-protein] and UDP-N-acetyl-alpha-D-glucosamine: step 2/6. Functionally, catalyzes the hydrolysis of UDP-3-O-myristoyl-N-acetylglucosamine to form UDP-3-O-myristoylglucosamine and acetate, the committed step in lipid A biosynthesis. In Pseudoalteromonas translucida (strain TAC 125), this protein is UDP-3-O-acyl-N-acetylglucosamine deacetylase.